Here is a 371-residue protein sequence, read N- to C-terminus: MRKTAILALEDGSYFVGYSFGAEGETGGELVFNTSMTGYQEILTDPSYKGQIVVMTYTQIGNYGVNDEDIESKSVQVNGFVVKEAFFRYSNWRAKKSLDEYLKENNVVGIYGIDTRALVKKIREKGSMKGVISTVEKDPKKLVQKARELPDISEQNLVEEVSAKDIYYWNQGDYDPRRGFLYRENEKPLVAVIDFGVKFNILRRLVSEGAKVVVVPPENAKEAIEKINPDAIFLSNGPGDPERVISGIRLTREYMEKKPIMGICLGCQIIGLALGGKTYKLKFGHHGGNHPVKDLRTGKIEITAQNHNFAIDPESLPEDVEVTHLNLLDNTVEGIKHKHLPIFAVQYHPENSPGPHDSYYLFKEFVKMAQG.

The tract at residues 1–190 (MRKTAILALE…LYRENEKPLV (190 aa)) is CPSase. Positions 47, 237, and 239 each coordinate L-glutamine. Residues 189 to 371 (LVAVIDFGVK…FKEFVKMAQG (183 aa)) form the Glutamine amidotransferase type-1 domain. Cys264 functions as the Nucleophile in the catalytic mechanism. The L-glutamine site is built by Leu265, Gln268, Asn306, and Phe309. Residues His348 and Glu350 contribute to the active site.

Belongs to the CarA family. As to quaternary structure, composed of two chains; the small (or glutamine) chain promotes the hydrolysis of glutamine to ammonia, which is used by the large (or ammonia) chain to synthesize carbamoyl phosphate. Tetramer of heterodimers (alpha,beta)4.

The enzyme catalyses hydrogencarbonate + L-glutamine + 2 ATP + H2O = carbamoyl phosphate + L-glutamate + 2 ADP + phosphate + 2 H(+). The catalysed reaction is L-glutamine + H2O = L-glutamate + NH4(+). The protein operates within amino-acid biosynthesis; L-arginine biosynthesis; carbamoyl phosphate from bicarbonate: step 1/1. It participates in pyrimidine metabolism; UMP biosynthesis via de novo pathway; (S)-dihydroorotate from bicarbonate: step 1/3. In terms of biological role, small subunit of the glutamine-dependent carbamoyl phosphate synthetase (CPSase). CPSase catalyzes the formation of carbamoyl phosphate from the ammonia moiety of glutamine, carbonate, and phosphate donated by ATP, constituting the first step of 2 biosynthetic pathways, one leading to arginine and/or urea and the other to pyrimidine nucleotides. The small subunit (glutamine amidotransferase) binds and cleaves glutamine to supply the large subunit with the substrate ammonia. The chain is Carbamoyl phosphate synthase small chain from Aquifex aeolicus (strain VF5).